The chain runs to 229 residues: Potassium/proton antiporter CemA (229 aa).

Helical transmembrane passes span 6-26, 107-127, and 189-209; these read AFIP…ISLC, ILHF…SFWG, and ILSG…KYWI.

Belongs to the CemA family.

The protein resides in the plastid. It localises to the chloroplast inner membrane. It catalyses the reaction K(+)(in) + H(+)(out) = K(+)(out) + H(+)(in). Functionally, contributes to K(+)/H(+) antiport activity by supporting proton efflux to control proton extrusion and homeostasis in chloroplasts in a light-dependent manner to modulate photosynthesis. Prevents excessive induction of non-photochemical quenching (NPQ) under continuous-light conditions. Indirectly promotes efficient inorganic carbon uptake into chloroplasts. The polypeptide is Potassium/proton antiporter CemA (Nasturtium officinale (Watercress)).